Consider the following 383-residue polypeptide: 1-deoxy-D-xylulose 5-phosphate reductoisomerase (383 aa).

The NADPH site is built by Thr-10, Gly-11, Ser-12, Ile-13, Asn-38, and Asn-121. Lys-122 is a binding site for 1-deoxy-D-xylulose 5-phosphate. An NADPH-binding site is contributed by Glu-123. Asp-147 is a binding site for Mn(2+). 1-deoxy-D-xylulose 5-phosphate contacts are provided by Ser-148, Glu-149, Ser-172, and His-195. Glu-149 contacts Mn(2+). Gly-201 is an NADPH binding site. 1-deoxy-D-xylulose 5-phosphate-binding residues include Ser-208, Asn-213, Lys-214, and Glu-217. Mn(2+) is bound at residue Glu-217.

Belongs to the DXR family. Mg(2+) serves as cofactor. Mn(2+) is required as a cofactor.

It carries out the reaction 2-C-methyl-D-erythritol 4-phosphate + NADP(+) = 1-deoxy-D-xylulose 5-phosphate + NADPH + H(+). Its pathway is isoprenoid biosynthesis; isopentenyl diphosphate biosynthesis via DXP pathway; isopentenyl diphosphate from 1-deoxy-D-xylulose 5-phosphate: step 1/6. In terms of biological role, catalyzes the NADPH-dependent rearrangement and reduction of 1-deoxy-D-xylulose-5-phosphate (DXP) to 2-C-methyl-D-erythritol 4-phosphate (MEP). This is 1-deoxy-D-xylulose 5-phosphate reductoisomerase from Ruthia magnifica subsp. Calyptogena magnifica.